A 265-amino-acid polypeptide reads, in one-letter code: Phosphate import ATP-binding protein PstB 1 (265 aa).

The region spanning 20 to 260 is the ABC transporter domain; sequence LSTNDLSVLY…PKGKITEDYI (241 aa). 53 to 60 serves as a coordination point for ATP; sequence GASGSGKS.

It belongs to the ABC transporter superfamily. Phosphate importer (TC 3.A.1.7) family. As to quaternary structure, the complex is composed of two ATP-binding proteins (PstB), two transmembrane proteins (PstC and PstA) and a solute-binding protein (PstS).

It is found in the cell membrane. The catalysed reaction is phosphate(out) + ATP + H2O = ADP + 2 phosphate(in) + H(+). Its function is as follows. Part of the ABC transporter complex PstSACB involved in phosphate import. Responsible for energy coupling to the transport system. In Lactobacillus acidophilus (strain ATCC 700396 / NCK56 / N2 / NCFM), this protein is Phosphate import ATP-binding protein PstB 1.